We begin with the raw amino-acid sequence, 164 residues long: Protein SprT (164 aa).

One can recognise a SprT-like domain in the interval 14–156; the sequence is QLAESFFKRP…LCRRCRNTLV (143 aa). Histidine 69 contacts Zn(2+). Residue glutamate 70 is part of the active site. Histidine 73 lines the Zn(2+) pocket.

Belongs to the SprT family. Zn(2+) serves as cofactor.

It is found in the cytoplasm. This is Protein SprT from Pseudomonas fluorescens (strain Pf0-1).